The following is a 445-amino-acid chain: Homoserine O-succinyltransferase (445 aa).

One can recognise an AB hydrolase-1 domain in the interval 45–411 (NAVLICHALS…APHGHDSFLF (367 aa)). Catalysis depends on Ser-153, which acts as the Nucleophile. Arg-223 is a substrate binding site. Residues Asp-373 and His-406 contribute to the active site. Asp-407 provides a ligand contact to substrate.

Belongs to the AB hydrolase superfamily. MetX family. Homodimer.

The protein resides in the cytoplasm. It carries out the reaction L-homoserine + succinyl-CoA = O-succinyl-L-homoserine + CoA. It functions in the pathway amino-acid biosynthesis; L-methionine biosynthesis via de novo pathway; O-succinyl-L-homoserine from L-homoserine: step 1/1. Functionally, transfers a succinyl group from succinyl-CoA to L-homoserine, forming succinyl-L-homoserine. This chain is Homoserine O-succinyltransferase, found in Psychrobacter arcticus (strain DSM 17307 / VKM B-2377 / 273-4).